The sequence spans 210 residues: Thymidylate kinase (210 aa).

11-18 (GVDGAGKT) is a binding site for ATP.

Belongs to the thymidylate kinase family.

It carries out the reaction dTMP + ATP = dTDP + ADP. Its function is as follows. Phosphorylation of dTMP to form dTDP in both de novo and salvage pathways of dTTP synthesis. This is Thymidylate kinase (tmk) from Mycoplasma pneumoniae (strain ATCC 29342 / M129 / Subtype 1) (Mycoplasmoides pneumoniae).